The sequence spans 600 residues: UvrABC system protein C (600 aa).

The region spanning 15–92 (EKPGCYLMKD…IKKYQPYYNV (78 aa)) is the GIY-YIG domain. Residues 197-232 (TSVKQDLTTKMEKASENLEFERAAEIRDQLKYIEET) form the UVR domain.

Belongs to the UvrC family. In terms of assembly, interacts with UvrB in an incision complex.

It localises to the cytoplasm. In terms of biological role, the UvrABC repair system catalyzes the recognition and processing of DNA lesions. UvrC both incises the 5' and 3' sides of the lesion. The N-terminal half is responsible for the 3' incision and the C-terminal half is responsible for the 5' incision. The chain is UvrABC system protein C from Lactobacillus acidophilus (strain ATCC 700396 / NCK56 / N2 / NCFM).